Consider the following 454-residue polypeptide: Retinoblastoma-binding protein homolog 5 (454 aa).

6 WD repeats span residues 23–64 (LQNA…RTFS), 65–104 (AHCL…LLHR), 153–192 (SSDE…CVAW), 196–235 (NTVQ…HQRG), 248–288 (VNKA…LIKI), and 292–330 (NKGE…NWSA).

As to quaternary structure, component of the SET2 complex (also known as the SET1/COMPASS complex), which contains at least set-2, swd-2.1, cfp-1, rbbp-5, wdr-5.1, dpy-30 and ash-2.

The protein resides in the nucleus. Its function is as follows. Required for di- and trimethylation at 'Lys-4' of histone H3. Regulates left/right asymmetry of ASE sensory neurons, via its role as a component of the SET2 complex. The protein is Retinoblastoma-binding protein homolog 5 (rbbp-5) of Caenorhabditis elegans.